The chain runs to 296 residues: MTTLENPEMQAQLLSAALPYMQRYENKHVVVKYGGHAMGNPELGKAFARDVALLKQSGVNPIVVHGGGPQIQAMLTKLGIESRFEGGLRVTDEKTVEVVEMVLAGSINKEIVALINAEGEWAIGLCGKDGNMVFAQKAHKTVIDPDSNIEKVLDLGFVGEPAEVDRTLLDLLARSEMIPVIAPVAPGRDGHTYNINADTFAGAIAGALAATRLLFLTDVPGVLDKDKKLIKELSVADAQALIRDGTISGGMIPKVETCIDAIRRGVEGVVILNGKTPHSVLLELFTEHGAGTLIVP.

Substrate is bound by residues 67-68, Arg89, and Asn194; that span reads GG.

The protein belongs to the acetylglutamate kinase family. ArgB subfamily.

Its subcellular location is the cytoplasm. The enzyme catalyses N-acetyl-L-glutamate + ATP = N-acetyl-L-glutamyl 5-phosphate + ADP. Its pathway is amino-acid biosynthesis; L-arginine biosynthesis; N(2)-acetyl-L-ornithine from L-glutamate: step 2/4. Functionally, catalyzes the ATP-dependent phosphorylation of N-acetyl-L-glutamate. This Brucella canis (strain ATCC 23365 / NCTC 10854 / RM-666) protein is Acetylglutamate kinase.